The chain runs to 186 residues: Adenylate kinase (186 aa).

14–19 (GAGKGT) contacts ATP. Positions 34-63 (STGDILRDHVARGTPLGERVRPIMERGDLV) are NMP. AMP contacts are provided by residues Thr-35, Arg-40, 61-63 (DLV), 84-87 (GFPR), and Gln-91. The segment at 125-135 (RRAELEGRSDD) is LID. Arg-126 provides a ligand contact to ATP. AMP is bound by residues Arg-132 and Arg-143. Gly-171 contacts ATP.

This sequence belongs to the adenylate kinase family. As to quaternary structure, monomer.

The protein localises to the cytoplasm. It catalyses the reaction AMP + ATP = 2 ADP. It functions in the pathway purine metabolism; AMP biosynthesis via salvage pathway; AMP from ADP: step 1/1. Functionally, catalyzes the reversible transfer of the terminal phosphate group between ATP and AMP. Plays an important role in cellular energy homeostasis and in adenine nucleotide metabolism. The protein is Adenylate kinase of Thermus thermophilus (strain ATCC BAA-163 / DSM 7039 / HB27).